The following is a 428-amino-acid chain: MEIIFRGAALEVGRSCIEIKTDKSKILLDCGVKLGKEIEYPILDNSIRDVDKVFISHAHLDHSGALPVLFHRKMDVPVITTELSKKLIKVLLKDMVKIAETENKKIPYNNHDVKEAIRHTIPLNYNDKKYYKDFSYELFSAGHIPGSASILLNYQNNKTILYTGDVKLRDTRLTKGADLSYTKDDIDILIIESTYGNSIHPDRKAVELSFIEKIKEILFRGGVALIPVFAVDRAQEILLILNDYNIDAPIYLDGMAVEVTKLMLNYKHMLNESSQLEKALKNVKIIEKSEDRIKAIENLSKNGGIVVTTAGMLDGGPILYYLKLFMHNPKNALLLTGYQVRDSNGRHLIETGKIFIGKDEIKPNLEVCMYNFSCHAGMDELHEIIKKVNPELLIIQHGEEVQATILRNWALEHGFDAITPKLGEKIRI.

His57, His59, Asp61, His62, His143, Asp165, and His397 together coordinate Zn(2+).

Belongs to the metallo-beta-lactamase superfamily. RNA-metabolizing metallo-beta-lactamase-like family. Zn(2+) is required as a cofactor.

Its function is as follows. Probably an RNase. This is Probable RNase MJ4 from Methanocaldococcus jannaschii (strain ATCC 43067 / DSM 2661 / JAL-1 / JCM 10045 / NBRC 100440) (Methanococcus jannaschii).